Here is a 2225-residue protein sequence, read N- to C-terminus: MAALVLEDGSVLQGRPFGAAVSTAGEVVFQTGMVGYPEALTDPSYKAQILVLTYPLIGNYGIPSDEEDEFGLSKWFESSEIHVAGLVVGECCPTPSHWSANCTLHEWLQQRGIPGLQGVDTRELTKKLREQGSLLGKLVQKGTEPSALPFVDPNARPLAPEVSIKTPRVFNAGGAPRICALDCGLKYNQIRCLCQLGAEVTVVPWDHELDSQKYDGLFLSNGPGDPASYPGVVSTLSRVLSEPNPRPVFGICLGHQLLALAIGAKTYKMRYGNRGHNQPCLLVGTGRCFLTSQNHGFAVDADSLPAGWAPLFTNANDCSNEGIVHDSLPFFSVQFHPEHRAGPSDMELLFDVFLETVREAAAGNIGGQTVRERLAQRLCPPELPIPGSGLPPPRKVLILGSGGLSIGQAGEFDYSGSQAIKALKEENIQTLLINPNIATVQTSQGLADKVYFLPITLHYVTQVIRNERPDGVLLTFGGQTALNCGVELTKAGVLARYGVRVLGTPVETIELTEDRRAFAARMAEIGEHVAPSEAANSLEQAQAAAERLGYPVLVRAAFALGGLGSGFASTKEELSALVAPAFAHTSQVLIDKSLKGWKEIEYEVVRDAYGNCVTVCNMENLDPLGIHTGESIVVAPSQTLNDREYQLLRRTAIKVTQHLGIVGECNVQYALNPESEQYYIIEVNARLSRSSALASKATGYPLAYVAAKLALGIPLPELRNSVTGGTAAFEPSLDYCVVKIPRWDLSKFLRVSTKIGSCMKSVGEVMGIGRSFEEAFQKALRMVDENCVGFDHTVKPVSDMELETPTDKRIFVVAAALWAGYSVERLYELTRIDCWFLHRMKRIVTHAQLLEQHRGQALPQDLLHQAKCLGFSDKQIALAVLSTELAVRKLRQELGICPAVKQIDTVAAEWPAQTNYLYLTYWGNTHDLDFRAPHVLVLGSGVYRIGSSVEFDWCAVGCIQQLRKMGYKTIMVNYNPETVSTDYDMCDRLYFDEISFEVVMDIYELENPEGVILSMGGQLPNNMAMALHRQQCRVLGTSPEAIDSAENRFKFSRLLDTIGISQPQWRELSDLESARQFCHTVGYPCVVRPSYVLSGAAMNVAYTDGDLERFLSSAAAVSKEHPVVISKFIQEAKEIDVDAVACDGIVSAIAISEHVENAGVHSGDATLVTPPQDITPKTLERIKAIVHAVGQELQVTGPFNLQLIAKDDQLKVIECNVRVSRSFPFVSKTLGVDLVALATRIIMGEKVEPVGLMTGSGVVGVKVPQFSFSRLAGADVVLGVEMTSTGEVAGFGESRCEAYLKAMLSTGFKIPEKNILLTIGSYKNKSELLPTVRLLESLGYSLYASLGTADFYTEHGVKVTAVDWHFEEAVDGECPPQRSILDQLAENHFELVINLSMRGAGGRRLSSFVTKGYRTRRLAADFSVPLIIDIKCTKLFVEALGQIGPAPPLKVHVDCMTSQKLVRLPGLIDVHVHLREPGGTHKEDFASGTAAALAGGVTMVCAMPNTRPPIIDAPALALAQKLAEAGARCDFTLFLGASSENAGTLGAVAGSAAGLKLYLNETFSELRLDSVAQWMEHFETWPAHLPIVAHAERQSVAAVLMVAQLTQRPVHICHVARKEEILLIKTAKAQGLPVTCEVAPHHLFLNREDLERLGPGKGEVRPELGSREDMEALWENMAVIDCFASDHAPHTLEEKCGPKPPPGFPGLETMLPLLLTAVSEGRLSLDDLLQRLHHNPRRIFHLPLQEDTYVEVDLEHEWTVPSHMPFSKARWTPFEGQKVKGTVRRVVLRGEVAYIDGQVLVPPGYGQDVRKWPQGVVPQPPPSTPATTEITTTPERPRRVIPGLPDGRFHLPPRIHRASDPGLPAEEPKEKPPRKVVEPELMGTPDGPCYPAPPVPRQASPQNLGSSGLLHPQMSPLLHSLVGQHILSVKQFTKDQMSHLFNVAHTLRMMVQKERSLDILKGKVMASMFYEVSTRTSSSFAAAMARLGGAVLSFSEATSSVQKGESLADSVQTMSCYADVIVLRHPQPGAVELAAKHCRRPVINAGDGVGEHPTQALLDIFTIREELGTVNGMTITMVGDLKHGRTVHSLACLLTQYRVSLRYVAPPSLRMPPSVRDFVASRGTKQEEFESIEEALPDTDVLYMTRIQKERFGSVQEYEACFGQFILTPHIMTRAKKKMVVMHPMPRVNEISVEVDSDPRAAYFRQAENGMYIRMALLATVLGRF.

Position 2 is an N-acetylalanine (Ala-2). A GATase (Glutamine amidotransferase) region spans residues 2 to 365 (AALVLEDGSV…TVREAAAGNI (364 aa)). L-glutamine contacts are provided by Ser-44, Gly-222, and Gly-224. The region spanning 177 to 363 (RICALDCGLK…LETVREAAAG (187 aa)) is the Glutamine amidotransferase type-1 domain. Catalysis depends on Cys-252, which acts as the Nucleophile; for GATase activity. L-glutamine-binding residues include Leu-253, Gln-256, Asn-294, Gly-296, and Phe-297. Active-site for GATase activity residues include His-336 and Glu-338. The linker stretch occupies residues 366–394 (GGQTVRERLAQRLCPPELPIPGSGLPPPR). The segment at 395–933 (KVLILGSGGL…NTHDLDFRAP (539 aa)) is CPSase A. A CPSase (Carbamoyl-phosphate synthase) region spans residues 395 to 1455 (KVLILGSGGL…APPLKVHVDC (1061 aa)). Position 456 is a phosphothreonine; by MAPK1 (Thr-456). Residues Arg-515, Arg-555, Gly-561, Gly-562, Lys-592, Glu-599, Gly-625, Ile-626, His-627, Gln-668, and Glu-682 each coordinate ATP. The 193-residue stretch at 519-711 (AARMAEIGEH…LAYVAAKLAL (193 aa)) folds into the ATP-grasp 1 domain. Gln-668, Glu-682, and Asn-684 together coordinate Mg(2+). Residues Gln-668, Glu-682, and Asn-684 each coordinate Mn(2+). Lys-747 carries the post-translational modification N6-acetyllysine. A CPSase B region spans residues 934 to 1455 (HVLVLGSGVY…APPLKVHVDC (522 aa)). At Ser-1038 the chain carries Phosphoserine. In terms of domain architecture, ATP-grasp 2 spans 1052–1243 (SRLLDTIGIS…LVALATRIIM (192 aa)). ATP contacts are provided by Arg-1088, Lys-1127, Ile-1129, Glu-1134, Gly-1159, Val-1160, His-1161, Ser-1162, Gln-1202, and Glu-1214. Mg(2+)-binding residues include Gln-1202, Glu-1214, and Asn-1216. Residues Gln-1202, Glu-1214, and Asn-1216 each coordinate Mn(2+). The 155-residue stretch at 1308 to 1462 (FKIPEKNILL…VDCMTSQKLV (155 aa)) folds into the MGS-like domain. Ser-1406 carries the post-translational modification Phosphoserine; by PKA. Position 1411 is an N6-acetyllysine (Lys-1411). The segment at 1456-1788 (MTSQKLVRLP…VKGTVRRVVL (333 aa)) is DHOase (dihydroorotase). Zn(2+) contacts are provided by His-1471 and His-1473. Residues Arg-1475 and Asn-1505 each contribute to the (S)-dihydroorotate site. Residues Lys-1556, His-1590, Cys-1613, His-1614, and Glu-1637 each coordinate Zn(2+). Lys-1556 is modified (N6-carboxylysine). Arg-1661 contributes to the (S)-dihydroorotate binding site. Zn(2+) is bound at residue Asp-1686. Asp-1686 serves as the catalytic For DHOase activity. The (S)-dihydroorotate site is built by His-1690 and Pro-1702. Residues 1789–1917 (RGEVAYIDGQ…GLLHPQMSPL (129 aa)) form a linker region. The segment at 1815 to 1885 (GVVPQPPPST…VVEPELMGTP (71 aa)) is disordered. Low complexity predominate over residues 1825–1834 (PATTEITTTP). A Phosphoserine modification is found at Ser-1859. Basic and acidic residues predominate over residues 1866–1878 (EEPKEKPPRKVVE). Thr-1884 carries the post-translational modification Phosphothreonine. Ser-1900 and Ser-1938 each carry phosphoserine. An ATCase (Aspartate transcarbamylase) region spans residues 1918 to 2225 (LHSLVGQHIL…ALLATVLGRF (308 aa)). The carbamoyl phosphate site is built by Arg-1975 and Thr-1976. An L-aspartate-binding site is contributed by Lys-2003. Carbamoyl phosphate is bound by residues Arg-2024, His-2052, and Gln-2055. Positions 2085 and 2146 each coordinate L-aspartate. Residues Met-2185 and Pro-2186 each contribute to the carbamoyl phosphate site.

The protein in the N-terminal section; belongs to the CarA family. It in the 2nd section; belongs to the CarB family. This sequence in the 3rd section; belongs to the metallo-dependent hydrolases superfamily. DHOase family. CAD subfamily. In the C-terminal section; belongs to the aspartate/ornithine carbamoyltransferase superfamily. ATCase family. Homohexamer. Interacts with CIPC. The cofactor is Zn(2+). Mg(2+) serves as cofactor. Mn(2+) is required as a cofactor. Activated by MAP kinase (Erk1/2) phosphorylation just prior to the S phase of the cell cycle, when the demand for pyrimidine nucleotides is greatest, and down-regulated as the cells emerge from S phase by protein kinase A (PKA) phosphorylation. Phosphorylation at Ser-1859 by RPS6KB1 downstream of MTOR promotes oligomerization and stimulates dihydroorotase activity. Phosphorylation at Ser-1406 reduces sensitivity to feedback inhibition by UTP.

It localises to the cytoplasm. The protein localises to the nucleus. It catalyses the reaction hydrogencarbonate + L-glutamine + 2 ATP + H2O = carbamoyl phosphate + L-glutamate + 2 ADP + phosphate + 2 H(+). It carries out the reaction L-glutamine + H2O = L-glutamate + NH4(+). The catalysed reaction is hydrogencarbonate + NH4(+) + 2 ATP = carbamoyl phosphate + 2 ADP + phosphate + 2 H(+). The enzyme catalyses carbamoyl phosphate + L-aspartate = N-carbamoyl-L-aspartate + phosphate + H(+). It catalyses the reaction (S)-dihydroorotate + H2O = N-carbamoyl-L-aspartate + H(+). Its pathway is pyrimidine metabolism; UMP biosynthesis via de novo pathway; (S)-dihydroorotate from bicarbonate: step 1/3. It functions in the pathway pyrimidine metabolism; UMP biosynthesis via de novo pathway; (S)-dihydroorotate from bicarbonate: step 2/3. The protein operates within pyrimidine metabolism; UMP biosynthesis via de novo pathway; (S)-dihydroorotate from bicarbonate: step 3/3. Allosterically regulated and controlled by phosphorylation. 5-phosphoribose 1-diphosphate (PRPP) is an activator while UMP and UTP are inhibitors of the CPSase reaction. Multifunctional protein that encodes the first 3 enzymatic activities of the de novo pyrimidine pathway: carbamoylphosphate synthetase (CPSase; EC 6.3.5.5), aspartate transcarbamylase (ATCase; EC 2.1.3.2) and dihydroorotase (DHOase; EC 3.5.2.3). The CPSase-function is accomplished in 2 steps, by a glutamine-dependent amidotransferase activity (GATase) that binds and cleaves glutamine to produce ammonia, followed by an ammonium-dependent carbamoyl phosphate synthetase, which reacts with the ammonia, hydrogencarbonate and ATP to form carbamoyl phosphate. The endogenously produced carbamoyl phosphate is sequestered and channeled to the ATCase active site. ATCase then catalyzes the formation of carbamoyl-L-aspartate from L-aspartate and carbamoyl phosphate. In the last step, DHOase catalyzes the cyclization of carbamoyl aspartate to dihydroorotate. The protein is Multifunctional protein CAD (Cad) of Mus musculus (Mouse).